The primary structure comprises 165 residues: Chorismate pyruvate-lyase (165 aa).

4 residues coordinate substrate: Met-35, Arg-77, Leu-115, and Glu-156.

The protein belongs to the UbiC family. In terms of assembly, monomer.

It localises to the cytoplasm. The catalysed reaction is chorismate = 4-hydroxybenzoate + pyruvate. The protein operates within cofactor biosynthesis; ubiquinone biosynthesis. Its function is as follows. Removes the pyruvyl group from chorismate, with concomitant aromatization of the ring, to provide 4-hydroxybenzoate (4HB) for the ubiquinone pathway. The sequence is that of Chorismate pyruvate-lyase from Shigella dysenteriae serotype 1 (strain Sd197).